The primary structure comprises 133 residues: Alcohol dehydrogenase, 15 kDa subunit (133 aa).

A signal peptide spans 1 to 24 (MFRRIVPVLGLALGLGLASQAAMA). Residues 23 to 43 (MAQEQSPPPPPAVQGTPGKDF) form a disordered region. Glutamine 25 is subject to Pyrrolidone carboxylic acid.

The alcohol dehydrogenase multicomponent enzyme system is composed of a dehydrogenase subunit I (AdhA), a cytochrome c subunit II (AdhB) and a subunit III (AdhS).

Its subcellular location is the cell membrane. Its function is as follows. Part of the alcohol dehydrogenase multicomponent enzyme system which is involved in the production of acetic acid and in the ethanol oxidase respiratory chain. Does not play an obligatory role for the alcohol dehydrogenase (ADH) activity. In Gluconobacter oxydans (strain 621H) (Gluconobacter suboxydans), this protein is Alcohol dehydrogenase, 15 kDa subunit.